Reading from the N-terminus, the 766-residue chain is Protein transport protein Sec23B (766 aa).

Position 2 is an N-acetylalanine (Ala-2). Residues Cys-61, Cys-66, Cys-85, and Cys-88 each contribute to the Zn(2+) site. Lys-564 is modified (N6-acetyllysine). The stretch at 633–719 (PEPVLLDSSS…EHGGSQARFL (87 aa)) is one Gelsolin-like repeat.

This sequence belongs to the SEC23/SEC24 family. SEC23 subfamily. COPII is composed of at least five proteins: the Sec23/24 complex, the Sec13/31 complex and Sar1. Interacts with SAR1A.

The protein localises to the cytoplasmic vesicle. It is found in the COPII-coated vesicle membrane. It localises to the endoplasmic reticulum membrane. The protein resides in the cytoplasm. Its subcellular location is the cytosol. In terms of biological role, component of the coat protein complex II (COPII) which promotes the formation of transport vesicles from the endoplasmic reticulum (ER). The coat has two main functions, the physical deformation of the endoplasmic reticulum membrane into vesicles and the selection of cargo molecules for their transport to the Golgi complex. The polypeptide is Protein transport protein Sec23B (Pongo abelii (Sumatran orangutan)).